Consider the following 306-residue polypeptide: Acetyl-coenzyme A carboxylase carboxyl transferase subunit beta (306 aa).

Residues 27 to 296 (LWHKCPSCEA…PRFVAPVIEP (270 aa)) form the CoA carboxyltransferase N-terminal domain. Residues Cys-31, Cys-34, Cys-50, and Cys-53 each contribute to the Zn(2+) site. The C4-type zinc finger occupies 31–53 (CPSCEAVLYRPELEKTLDVCPKC).

It belongs to the AccD/PCCB family. Acetyl-CoA carboxylase is a heterohexamer composed of biotin carboxyl carrier protein (AccB), biotin carboxylase (AccC) and two subunits each of ACCase subunit alpha (AccA) and ACCase subunit beta (AccD). Requires Zn(2+) as cofactor.

Its subcellular location is the cytoplasm. It catalyses the reaction N(6)-carboxybiotinyl-L-lysyl-[protein] + acetyl-CoA = N(6)-biotinyl-L-lysyl-[protein] + malonyl-CoA. It functions in the pathway lipid metabolism; malonyl-CoA biosynthesis; malonyl-CoA from acetyl-CoA: step 1/1. In terms of biological role, component of the acetyl coenzyme A carboxylase (ACC) complex. Biotin carboxylase (BC) catalyzes the carboxylation of biotin on its carrier protein (BCCP) and then the CO(2) group is transferred by the transcarboxylase to acetyl-CoA to form malonyl-CoA. The polypeptide is Acetyl-coenzyme A carboxylase carboxyl transferase subunit beta (Pseudomonas syringae pv. syringae (strain B728a)).